Here is a 244-residue protein sequence, read N- to C-terminus: Histone H1, orphon (244 aa).

Positions 1–21 (MSDPAPEIEAPVEAAPVASPP) are enriched in low complexity. Disordered regions lie at residues 1 to 59 (MSDP…PVSE) and 113 to 244 (QAKG…KKAK). Residues 35-45 (PKAEKPKSDKP) are compositionally biased toward basic and acidic residues. An H15 domain is found at 53 to 127 (THPPVSEMVV…GASGSFKLPP (75 aa)). Residues 186 to 203 (AKPASKKAAAPKPKAAKP) show a composition bias toward low complexity. The span at 213–244 (ATKAAAKKPVAKPVAKKPAAKPAKKPAAKKAK) shows a compositional bias: basic residues.

This sequence belongs to the histone H1/H5 family.

Its subcellular location is the nucleus. The protein localises to the chromosome. In terms of biological role, histones H1 are necessary for the condensation of nucleosome chains into higher-order structures. The polypeptide is Histone H1, orphon (Chironomus thummi thummi (Midge)).